The primary structure comprises 856 residues: Glucans biosynthesis glucosyltransferase H (856 aa).

6 helical membrane-spanning segments follow: residues 144–164 (ILLV…KGIM), 198–218 (ILIM…TALM), 517–537 (VFLT…FLVL), 574–594 (LFST…ILIW), 608–628 (TLSM…RMIF), and 691–711 (IVGS…VGLG).

Belongs to the glycosyltransferase 2 family. OpgH subfamily.

The protein resides in the cell inner membrane. It functions in the pathway glycan metabolism; osmoregulated periplasmic glucan (OPG) biosynthesis. In terms of biological role, involved in the biosynthesis of osmoregulated periplasmic glucans (OPGs). The polypeptide is Glucans biosynthesis glucosyltransferase H (Pseudomonas fluorescens (strain Pf0-1)).